A 457-amino-acid polypeptide reads, in one-letter code: Prenyltransferase ucdE (457 aa).

Dimethylallyl diphosphate-binding residues include Arg-106, Lys-198, Lys-277, Tyr-279, Tyr-382, Tyr-447, and Tyr-451.

It belongs to the tryptophan dimethylallyltransferase family.

It functions in the pathway secondary metabolite biosynthesis. Its function is as follows. Nonribosomal peptide synthetase that mediates the biosynthesis of usterphenyllins and uscandidusins, p-terphenyl derivatives. Within the pathway, ucdE prenylates position C-5 of ring A of 3,15-dihydroxyterphenyllin to produce forms usterphenyllin B. UcdE further prenylates position C-14 of ring C of usterphenyllin B to form usterphenyllin A. The pathway begin with the biosynthesis of 4-hydroxyphenylpyruvate (HPPA) from L-tyrosine, possibly by the aminotransferase ucdG. The nonribosomal peptide synthetase ucdA then condenses two HPPA units to produce atromentin. The key step in this pathway is the reduction and dehydration of atromentin to form a terphenyl triol intermediate, performed by the NAD-dependent dehydrogenase ucdB. Further O-methylation by the methyltransferase ucdC forms terphenyllin carrying two methoxy moieties at C-9 and C-12, and subsequent dihydroxylation at C-3 of ring A and C-15 of ring C by the flavin-dependent oxygenase ucdD leads to 3,15-dihydroxyterphenyllin. Prenylation by ucdE at position C-5 of ring A forms usterphenyllin B, and is followed by a second prenylation at position C-14 of ring C to form usterphenyllin A. The following furan ring formation that leads to uscandidusins A and B was proven to be an unexpected spontaneous non-enzymatic reaction. The chain is Prenyltransferase ucdE from Aspergillus ustus.